Reading from the N-terminus, the 335-residue chain is Tetraacyldisaccharide 4'-kinase (335 aa).

An ATP-binding site is contributed by 59–66; it reads TAGGNGKT.

The protein belongs to the LpxK family.

It catalyses the reaction a lipid A disaccharide + ATP = a lipid IVA + ADP + H(+). It participates in glycolipid biosynthesis; lipid IV(A) biosynthesis; lipid IV(A) from (3R)-3-hydroxytetradecanoyl-[acyl-carrier-protein] and UDP-N-acetyl-alpha-D-glucosamine: step 6/6. Functionally, transfers the gamma-phosphate of ATP to the 4'-position of a tetraacyldisaccharide 1-phosphate intermediate (termed DS-1-P) to form tetraacyldisaccharide 1,4'-bis-phosphate (lipid IVA). The protein is Tetraacyldisaccharide 4'-kinase of Vibrio campbellii (strain ATCC BAA-1116).